We begin with the raw amino-acid sequence, 807 residues long: 1,4-alpha-glucan branching enzyme GlgB (807 aa).

D405 functions as the Nucleophile in the catalytic mechanism. E458 (proton donor) is an active-site residue.

The protein belongs to the glycosyl hydrolase 13 family. GlgB subfamily. In terms of assembly, monomer.

The catalysed reaction is Transfers a segment of a (1-&gt;4)-alpha-D-glucan chain to a primary hydroxy group in a similar glucan chain.. The protein operates within glycan biosynthesis; glycogen biosynthesis. Its function is as follows. Catalyzes the formation of the alpha-1,6-glucosidic linkages in glycogen by scission of a 1,4-alpha-linked oligosaccharide from growing alpha-1,4-glucan chains and the subsequent attachment of the oligosaccharide to the alpha-1,6 position. The protein is 1,4-alpha-glucan branching enzyme GlgB of Histophilus somni (strain 129Pt) (Haemophilus somnus).